The sequence spans 314 residues: MVQQRGARAKRDGGPPPPGPGPAAEGAREPGWCKTPSGHIKRPMNAFMVWSQHERRKIMDQWPDMHNAEISKRLGRRWQLLQDSEKIPFVREAERLRLKHMADYPDYKYRPRKKSKGAPAKARPRPPGGGGGGSRLKPGPQLPGRGGRRASGGPLGGGAAAPEDDDEDEEEELLEVRLLETPGRELWRMVPAGRAARGPAERAQGPSGEGAAASAASPTLSEDEEPEEEEEEAATAEEGEEETVVSGEEPLGFLSRMPPGPAGLDCSALDRDPDLLPPSGTSHFEFPDYCTPEVTEMIAGDWRSSSIADLVFTY.

Disordered stretches follow at residues 1-40 and 101-287; these read MVQQ…SGHI and MADY…FEFP. The segment at residues 40-108 is a DNA-binding region (HMG box); the sequence is IKRPMNAFMV…KHMADYPDYK (69 aa). Over residues 149-159 the composition is skewed to gly residues; the sequence is RASGGPLGGGA. Residues 162-173 show a composition bias toward acidic residues; sequence PEDDDEDEEEEL. A compositionally biased stretch (basic and acidic residues) spans 174-187; it reads LEVRLLETPGRELW. Positions 191–217 are enriched in low complexity; the sequence is PAGRAARGPAERAQGPSGEGAAASAAS. The segment covering 221–243 has biased composition (acidic residues); that stretch reads SEDEEPEEEEEEAATAEEGEEET. A required for transcriptional activation activity and synergistic coactivation of transcriptional activity with POU3F2 region spans residues 282–314; sequence SHFEFPDYCTPEVTEMIAGDWRSSSIADLVFTY.

Expressed in splenic and thymic regulatory T-cells (at protein level). Expressed in embryonic molar and incisor teeth.

The protein resides in the nucleus. Transcription factor that binds to DNA at the consensus sequence 5'-ACCAAAG-3'. Acts as a transcriptional activator. Binds cooperatively with POU3F2/BRN2 or POU3F1/OCT6 to gene promoters, which enhances transcriptional activation. Involved in the differentiation of naive CD4-positive T-cells into peripherally induced regulatory T (pT reg) cells under inflammatory conditions. Binds to the promoter region of the FOXP3 gene and promotes its transcription, and might thereby contribute to pT reg cell differentiation in the spleen and lymph nodes during inflammation. Plays a redundant role with SOX4 and SOX11 in cell survival of developing tissues such as the neural tube, branchial arches and somites, thereby contributing to organogenesis. In Mus musculus (Mouse), this protein is Transcription factor SOX-12 (Sox12).